The chain runs to 258 residues: 5-oxoprolinase subunit A (258 aa).

Belongs to the LamB/PxpA family. In terms of assembly, forms a complex composed of PxpA, PxpB and PxpC.

The catalysed reaction is 5-oxo-L-proline + ATP + 2 H2O = L-glutamate + ADP + phosphate + H(+). Catalyzes the cleavage of 5-oxoproline to form L-glutamate coupled to the hydrolysis of ATP to ADP and inorganic phosphate. This is 5-oxoprolinase subunit A from Corynebacterium jeikeium (strain K411).